The sequence spans 1347 residues: Spermatogenesis-associated protein 31A7 (1347 aa).

A helical membrane pass occupies residues 23-43 (PWVLDIFLTLVFALGFFFLLL). Disordered stretches follow at residues 55–88 (PSPS…RECP), 106–233 (GPHL…RDST), 374–397 (QDTT…GPQK), 628–658 (DESP…EAQK), 900–955 (RGIP…REAV), 1084–1161 (VHEE…PSVS), and 1313–1335 (KAVS…SHHH). Residues 60–82 (GKRKCPVGRRRRPRGRMKNHSLR) are compositionally biased toward basic residues. Residues 165–178 (LASTPSPGPMTTSV) show a composition bias toward polar residues. The segment covering 198–211 (PEPPALFPHPPHTP) has biased composition (pro residues). 2 stretches are compositionally biased toward polar residues: residues 631-651 (PGTS…STGE) and 927-948 (LTYS…SSKA). Composition is skewed to basic and acidic residues over residues 1108-1127 (HKSE…RLEG) and 1137-1146 (RKTEDTHQDE).

It belongs to the SPATA31 family.

It localises to the membrane. Its function is as follows. May play a role in spermatogenesis. The sequence is that of Spermatogenesis-associated protein 31A7 from Homo sapiens (Human).